We begin with the raw amino-acid sequence, 526 residues long: MSTTVRPDEVSSILRKQLAGFESEADVYDVGTVLQVGDGIARVYGLSKAAAGELLEFPNKVMGMALNLEEDNVGAVLFGESNLVKEGDTVKRTGILASIPVGEAMLGRVINPLGEPIDGKGPIETQIRLPLERRAPGVIYRKSVHEPLQTGLKAIDSMIPIGRGQRELIIGDRQTGKTAVAIDTIINQKGKGVFCIYVAIGLKGSTVAQVVNTLEKFGAMEYTTVITATASDPAPLQFIAPFAGATLGEYFRDTGRHALVVYDDLSKQAVAYRQLSLLLRRPPGREAYPGDVFYLHSRLLERAAKITDDIEVARKMNDLPDALKSMVKGGGSLTALPVIETQAGDVSAYIPTNVISITDGQIFLESNLFNSGQRPAINVGISVSRVGGSAQIKAMKKVAGTLRLDLAQFRELEAFSKFGSDLDKTTKAQLDRGARLVEILKQGQYIPMAVEKQVAIIFLGTQGLLDAVDVTRIRKFEEEFLGLLEHKHPEVLKAIAETGTLETDTANKIKEAAQKFIASFNQKAKA.

171-178 (GDRQTGKT) serves as a coordination point for ATP.

This sequence belongs to the ATPase alpha/beta chains family. F-type ATPases have 2 components, CF(1) - the catalytic core - and CF(0) - the membrane proton channel. CF(1) has five subunits: alpha(3), beta(3), gamma(1), delta(1), epsilon(1). CF(0) has four main subunits: a(1), b(1), b'(1) and c(9-12).

The protein resides in the cell inner membrane. It carries out the reaction ATP + H2O + 4 H(+)(in) = ADP + phosphate + 5 H(+)(out). Produces ATP from ADP in the presence of a proton gradient across the membrane. The alpha chain is a regulatory subunit. This chain is ATP synthase subunit alpha, found in Chlorobium phaeobacteroides (strain DSM 266 / SMG 266 / 2430).